The sequence spans 124 residues: Protein MGF 110-5L (124 aa).

The first 28 residues, 1-28 (MLVIILGVIGLLANQVLGLPTQAGGHLR), serve as a signal peptide directing secretion.

Belongs to the asfivirus MGF 110 family.

Plays a role in virus cell tropism, and may be required for efficient virus replication in macrophages. This is Protein MGF 110-5L from Ornithodoros (relapsing fever ticks).